The primary structure comprises 412 residues: Phosphoglycerate kinase (412 aa).

Residues 24-26 (DLN), R44, 67-70 (HLGR), R126, and R170 each bind substrate. ATP contacts are provided by residues K220, G308, E339, and 368-371 (GGDS).

It belongs to the phosphoglycerate kinase family. As to quaternary structure, monomer.

The protein resides in the cytoplasm. The catalysed reaction is (2R)-3-phosphoglycerate + ATP = (2R)-3-phospho-glyceroyl phosphate + ADP. It functions in the pathway carbohydrate degradation; glycolysis; pyruvate from D-glyceraldehyde 3-phosphate: step 2/5. The chain is Phosphoglycerate kinase from Mycobacteroides abscessus (strain ATCC 19977 / DSM 44196 / CCUG 20993 / CIP 104536 / JCM 13569 / NCTC 13031 / TMC 1543 / L948) (Mycobacterium abscessus).